Consider the following 946-residue polypeptide: Protein translocase subunit SecA (946 aa).

Residues Gln-87, 105-109, and Asp-524 each bind ATP; that span reads GEGKT. Disordered regions lie at residues 872–892 and 904–946; these read PEQPRELPPMEVHKMDPNTGE and PADT…GRYA. Residues 907–917 show a composition bias toward basic and acidic residues; it reads TVEKSERDPNR. Residues Cys-930, Cys-932, Cys-941, and His-942 each contribute to the Zn(2+) site. Residues 936 to 946 show a composition bias toward basic residues; the sequence is KKYKHCHGRYA.

It belongs to the SecA family. In terms of assembly, monomer and homodimer. Part of the essential Sec protein translocation apparatus which comprises SecA, SecYEG and auxiliary proteins SecDF-YajC and YidC. It depends on Zn(2+) as a cofactor.

Its subcellular location is the cell inner membrane. It is found in the cytoplasm. The catalysed reaction is ATP + H2O + cellular proteinSide 1 = ADP + phosphate + cellular proteinSide 2.. In terms of biological role, part of the Sec protein translocase complex. Interacts with the SecYEG preprotein conducting channel. Has a central role in coupling the hydrolysis of ATP to the transfer of proteins into and across the cell membrane, serving both as a receptor for the preprotein-SecB complex and as an ATP-driven molecular motor driving the stepwise translocation of polypeptide chains across the membrane. This chain is Protein translocase subunit SecA, found in Rhodopseudomonas palustris (strain BisB5).